The chain runs to 618 residues: Proline--tRNA ligase (618 aa).

Belongs to the class-II aminoacyl-tRNA synthetase family. ProS type 1 subfamily. In terms of assembly, homodimer.

The protein localises to the cytoplasm. It carries out the reaction tRNA(Pro) + L-proline + ATP = L-prolyl-tRNA(Pro) + AMP + diphosphate. Functionally, catalyzes the attachment of proline to tRNA(Pro) in a two-step reaction: proline is first activated by ATP to form Pro-AMP and then transferred to the acceptor end of tRNA(Pro). As ProRS can inadvertently accommodate and process non-cognate amino acids such as alanine and cysteine, to avoid such errors it has two additional distinct editing activities against alanine. One activity is designated as 'pretransfer' editing and involves the tRNA(Pro)-independent hydrolysis of activated Ala-AMP. The other activity is designated 'posttransfer' editing and involves deacylation of mischarged Ala-tRNA(Pro). The misacylated Cys-tRNA(Pro) is not edited by ProRS. This Streptococcus uberis (strain ATCC BAA-854 / 0140J) protein is Proline--tRNA ligase.